The following is a 226-amino-acid chain: Lipoprotein-releasing system ATP-binding protein LolD (226 aa).

Residues 5–225 (FALSNISKFF…EINSCMLSSV (221 aa)) form the ABC transporter domain. 40 to 47 (GRSGSGKS) is a binding site for ATP.

The protein belongs to the ABC transporter superfamily. Lipoprotein translocase (TC 3.A.1.125) family. In terms of assembly, the complex is composed of two ATP-binding proteins (LolD) and two transmembrane proteins (LolC and LolE).

The protein resides in the cell inner membrane. In terms of biological role, part of the ABC transporter complex LolCDE involved in the translocation of mature outer membrane-directed lipoproteins, from the inner membrane to the periplasmic chaperone, LolA. Responsible for the formation of the LolA-lipoprotein complex in an ATP-dependent manner. The sequence is that of Lipoprotein-releasing system ATP-binding protein LolD from Ehrlichia canis (strain Jake).